The sequence spans 238 residues: Ribonuclease PH (238 aa).

Phosphate contacts are provided by residues arginine 86 and glycine 124–arginine 126.

Belongs to the RNase PH family. In terms of assembly, homohexameric ring arranged as a trimer of dimers.

It catalyses the reaction tRNA(n+1) + phosphate = tRNA(n) + a ribonucleoside 5'-diphosphate. Functionally, phosphorolytic 3'-5' exoribonuclease that plays an important role in tRNA 3'-end maturation. Removes nucleotide residues following the 3'-CCA terminus of tRNAs; can also add nucleotides to the ends of RNA molecules by using nucleoside diphosphates as substrates, but this may not be physiologically important. Probably plays a role in initiation of 16S rRNA degradation (leading to ribosome degradation) during starvation. The protein is Ribonuclease PH of Actinobacillus pleuropneumoniae serotype 7 (strain AP76).